The primary structure comprises 383 residues: Lipid-A-disaccharide synthase (383 aa).

It belongs to the LpxB family.

It carries out the reaction a lipid X + a UDP-2-N,3-O-bis[(3R)-3-hydroxyacyl]-alpha-D-glucosamine = a lipid A disaccharide + UDP + H(+). Its pathway is bacterial outer membrane biogenesis; LPS lipid A biosynthesis. Condensation of UDP-2,3-diacylglucosamine and 2,3-diacylglucosamine-1-phosphate to form lipid A disaccharide, a precursor of lipid A, a phosphorylated glycolipid that anchors the lipopolysaccharide to the outer membrane of the cell. This is Lipid-A-disaccharide synthase from Anaeromyxobacter sp. (strain K).